Reading from the N-terminus, the 335-residue chain is tRNA N6-adenosine threonylcarbamoyltransferase (335 aa).

A divalent metal cation contacts are provided by H109, H113, and Y130. Substrate is bound by residues 130 to 134 (YVSGG), D162, G177, E181, and N266. An a divalent metal cation-binding site is contributed by D294.

This sequence belongs to the KAE1 / TsaD family. Component of the EKC/KEOPS complex composed of at least GON7, TP53RK, TPRKB, OSGEP and LAGE3; the whole complex dimerizes. The cofactor is a divalent metal cation.

The protein localises to the cytoplasm. It localises to the nucleus. The enzyme catalyses L-threonylcarbamoyladenylate + adenosine(37) in tRNA = N(6)-L-threonylcarbamoyladenosine(37) in tRNA + AMP + H(+). Component of the EKC/KEOPS complex that is required for the formation of a threonylcarbamoyl group on adenosine at position 37 (t(6)A37) in tRNAs that read codons beginning with adenine. The complex is probably involved in the transfer of the threonylcarbamoyl moiety of threonylcarbamoyl-AMP (TC-AMP) to the N6 group of A37. OSGEP likely plays a direct catalytic role in this reaction, but requires other protein(s) of the complex to fulfill this activity. The chain is tRNA N6-adenosine threonylcarbamoyltransferase (Osgep) from Rattus norvegicus (Rat).